A 455-amino-acid polypeptide reads, in one-letter code: Phosphoglucosamine mutase (455 aa).

The active-site Phosphoserine intermediate is the S102. The Mg(2+) site is built by S102, D241, D243, and D245. A Phosphoserine modification is found at S102.

Belongs to the phosphohexose mutase family. Mg(2+) serves as cofactor. Post-translationally, activated by phosphorylation.

The enzyme catalyses alpha-D-glucosamine 1-phosphate = D-glucosamine 6-phosphate. Catalyzes the conversion of glucosamine-6-phosphate to glucosamine-1-phosphate. The sequence is that of Phosphoglucosamine mutase from Legionella pneumophila (strain Paris).